Consider the following 346-residue polypeptide: Putative cytochrome bd menaquinol oxidase subunit II (346 aa).

9 consecutive transmembrane segments (helical) span residues 7 to 27 (ALIA…MATM), 63 to 83 (VFIV…TFVL), 87 to 107 (LLIP…FLVF), 119 to 139 (YISG…LPVT), 164 to 184 (AYSF…LLLA), 201 to 221 (KSAL…MVTM), 236 to 256 (FSWI…LFLP), 269 to 289 (LALV…GRAH), and 312 to 332 (ALFA…FFFW).

The protein belongs to the cytochrome ubiquinol oxidase subunit 2 family.

It is found in the cell membrane. In terms of biological role, may have a role in sporulation. Can compensate for the loss of cytochrome aa3. In Bacillus subtilis (strain 168), this protein is Putative cytochrome bd menaquinol oxidase subunit II (ythB).